Here is a 357-residue protein sequence, read N- to C-terminus: Sorbitol dehydrogenase (357 aa).

At Ala2 the chain carries N-acetylalanine. Cys45 provides a ligand contact to Zn(2+). A substrate-binding site is contributed by Tyr51. Positions 70 and 71 each coordinate Zn(2+). Glu156 is a substrate binding site. NAD(+) is bound by residues Ile184, Asp204, and Arg209. 2 positions are modified to phosphoserine: Ser211 and Ser225. Residues 273-275 (VGL) and 297-299 (VFR) contribute to the NAD(+) site. Substrate contacts are provided by Arg299 and Tyr300.

The protein belongs to the zinc-containing alcohol dehydrogenase family. As to quaternary structure, homotetramer. Zn(2+) serves as cofactor. As to expression, expressed in liver. Expressed in kidney and epithelial cells of both benign and malignant prostate tissue. Expressed in epididymis (at protein level).

The protein resides in the mitochondrion membrane. It is found in the cell projection. The protein localises to the cilium. It localises to the flagellum. The enzyme catalyses keto-D-fructose + NADH + H(+) = D-sorbitol + NAD(+). It catalyses the reaction L-threitol + NAD(+) = L-erythrulose + NADH + H(+). It carries out the reaction xylitol + NAD(+) = D-xylulose + NADH + H(+). The catalysed reaction is ribitol + NAD(+) = D-ribulose + NADH + H(+). The enzyme catalyses (R,R)-butane-2,3-diol + NAD(+) = (R)-acetoin + NADH + H(+). It catalyses the reaction L-iditol + NAD(+) = keto-L-sorbose + NADH + H(+). With respect to regulation, inhibited by CP-166,572, an inhibitor that is competitive with fructose. Also competitively inhibited by phenanthroline and 4-methylpyrazole in vitro. In terms of biological role, polyol dehydrogenase that catalyzes the reversible NAD(+)-dependent oxidation of various sugar alcohols. Is mostly active with D-sorbitol (D-glucitol), L-threitol, xylitol and ribitol as substrates, leading to the C2-oxidized products D-fructose, L-erythrulose, D-xylulose, and D-ribulose, respectively. Is a key enzyme in the polyol pathway that interconverts glucose and fructose via sorbitol, which constitutes an important alternate route for glucose metabolism. The polyol pathway is believed to be involved in the etiology of diabetic complications, such as diabetic neuropathy and retinopathy, induced by hyperglycemia. May play a role in sperm motility by using sorbitol as an alternative energy source for sperm motility. May have a more general function in the metabolism of secondary alcohols since it also catalyzes the stereospecific oxidation of (2R,3R)-2,3-butanediol. To a lesser extent, can also oxidize L-arabinitol, galactitol and D-mannitol and glycerol in vitro. Oxidizes neither ethanol nor other primary alcohols. Cannot use NADP(+) as the electron acceptor. This chain is Sorbitol dehydrogenase (SORD), found in Homo sapiens (Human).